The sequence spans 162 residues: Beta-lactoglobulin-1 (162 aa).

Disulfide bonds link cysteine 66–cysteine 160 and cysteine 106–cysteine 119.

It belongs to the calycin superfamily. Lipocalin family. Monomer. Synthesized in mammary gland and secreted in milk.

It localises to the secreted. Functionally, primary component of whey, it binds retinol and is probably involved in the transport of that molecule. The chain is Beta-lactoglobulin-1 (LGB1) from Equus asinus (Donkey).